The following is a 105-amino-acid chain: Met repressor (105 aa).

This sequence belongs to the MetJ family. As to quaternary structure, homodimer.

The protein localises to the cytoplasm. In terms of biological role, this regulatory protein, when combined with SAM (S-adenosylmethionine) represses the expression of the methionine regulon and of enzymes involved in SAM synthesis. This chain is Met repressor, found in Glaesserella parasuis serovar 5 (strain SH0165) (Haemophilus parasuis).